We begin with the raw amino-acid sequence, 148 residues long: Sec-independent protein translocase protein TatB (148 aa).

The helical transmembrane segment at 1 to 21 (MFDIGFWELVVIGIVALVVLG) threads the bilayer.

The protein belongs to the TatB family. In terms of assembly, the Tat system comprises two distinct complexes: a TatABC complex, containing multiple copies of TatA, TatB and TatC subunits, and a separate TatA complex, containing only TatA subunits. Substrates initially bind to the TatABC complex, which probably triggers association of the separate TatA complex to form the active translocon.

Its subcellular location is the cell inner membrane. Functionally, part of the twin-arginine translocation (Tat) system that transports large folded proteins containing a characteristic twin-arginine motif in their signal peptide across membranes. Together with TatC, TatB is part of a receptor directly interacting with Tat signal peptides. TatB may form an oligomeric binding site that transiently accommodates folded Tat precursor proteins before their translocation. This is Sec-independent protein translocase protein TatB from Aeromonas salmonicida (strain A449).